A 467-amino-acid polypeptide reads, in one-letter code: MRLYNTMTRTKEEFKPLKDKVVNMYVCGPTVYNYIHIGNARAFIVFDTVRRYLEYKGYTVNYVQNFTDIDDKIINRAKEENTTEKEIAERFIEEYFKDADALGIKRATVHPRATEHIDDIIEFIKILIDKGYAYVVDGNVYFETAKFKDYGKLSHKNIDELMAGARVEIDEKKKNPLDFALWKAQKPGEPAWDSPWGKGRPGWHIECSVMSTKYLGKTLDIHAGGPDLIFPHHENEIAQSEAAYDQPFSKYWMHIGYLNVNNEKMSKSKGNFFTVRELTEKYDPEVLRLFMLMAHYRSPINFSLDLLDQAKSAYERLSNAVVNLKHLANITKDRELSDEEKDLIVKFDEYKKQFEEAMDDDFNTADAISVLFEMAKTANANLSGNSSKKLVEYILEMFLKLSDVLGLSYKNAETEIEDEEILRLIEERQKARKEKNWKLADEIRDKLKERGIILEDTPEGVRWKRIR.

Position 27 (C27) interacts with Zn(2+). The 'HIGH' region signature appears at 29–39 (PTVYNYIHIGN). The Zn(2+) site is built by C207, H232, and E236. Residues 264–268 (KMSKS) carry the 'KMSKS' region motif. K267 lines the ATP pocket.

The protein belongs to the class-I aminoacyl-tRNA synthetase family. Monomer. The cofactor is Zn(2+).

It localises to the cytoplasm. It catalyses the reaction tRNA(Cys) + L-cysteine + ATP = L-cysteinyl-tRNA(Cys) + AMP + diphosphate. The sequence is that of Cysteine--tRNA ligase from Caldanaerobacter subterraneus subsp. tengcongensis (strain DSM 15242 / JCM 11007 / NBRC 100824 / MB4) (Thermoanaerobacter tengcongensis).